The primary structure comprises 166 residues: Interferon gamma (166 aa).

The signal sequence occupies residues M1 to C23. Q24 bears the Pyrrolidone carboxylic acid mark. Residues N48, N86, and N120 are each glycosylated (N-linked (GlcNAc...) asparagine).

This sequence belongs to the type II (or gamma) interferon family. As to quaternary structure, homodimer. Interacts with IFNGR1 (via extracellular domain); this interaction promotes IFNGR1 dimerization. As to expression, released primarily from activated T lymphocytes.

The protein localises to the secreted. Functionally, type II interferon produced by immune cells such as T-cells and NK cells that plays crucial roles in antimicrobial, antiviral, and antitumor responses by activating effector immune cells and enhancing antigen presentation. Primarily signals through the JAK-STAT pathway after interaction with its receptor IFNGR1 to affect gene regulation. Upon IFNG binding, IFNGR1 intracellular domain opens out to allow association of downstream signaling components JAK2, JAK1 and STAT1, leading to STAT1 activation, nuclear translocation and transcription of IFNG-regulated genes. Many of the induced genes are transcription factors such as IRF1 that are able to further drive regulation of a next wave of transcription. Plays a role in class I antigen presentation pathway by inducing a replacement of catalytic proteasome subunits with immunoproteasome subunits. In turn, increases the quantity, quality, and repertoire of peptides for class I MHC loading. Increases the efficiency of peptide generation also by inducing the expression of activator PA28 that associates with the proteasome and alters its proteolytic cleavage preference. Up-regulates as well MHC II complexes on the cell surface by promoting expression of several key molecules such as cathepsins B/CTSB, H/CTSH, and L/CTSL. Participates in the regulation of hematopoietic stem cells during development and under homeostatic conditions by affecting their development, quiescence, and differentiation. In Callithrix jacchus (White-tufted-ear marmoset), this protein is Interferon gamma (IFNG).